Consider the following 152-residue polypeptide: Ribosome maturation factor RimP (152 aa).

This sequence belongs to the RimP family.

It is found in the cytoplasm. Its function is as follows. Required for maturation of 30S ribosomal subunits. This Aeromonas hydrophila subsp. hydrophila (strain ATCC 7966 / DSM 30187 / BCRC 13018 / CCUG 14551 / JCM 1027 / KCTC 2358 / NCIMB 9240 / NCTC 8049) protein is Ribosome maturation factor RimP.